The primary structure comprises 317 residues: Acetylglutamate kinase (317 aa).

Residues 75–76, Arg97, and Asn196 each bind substrate; that span reads GG.

The protein belongs to the acetylglutamate kinase family. ArgB subfamily.

It localises to the cytoplasm. It catalyses the reaction N-acetyl-L-glutamate + ATP = N-acetyl-L-glutamyl 5-phosphate + ADP. It participates in amino-acid biosynthesis; L-arginine biosynthesis; N(2)-acetyl-L-ornithine from L-glutamate: step 2/4. Catalyzes the ATP-dependent phosphorylation of N-acetyl-L-glutamate. The protein is Acetylglutamate kinase of Corynebacterium jeikeium (strain K411).